The primary structure comprises 704 residues: SH3KBP1-binding protein 1 (704 aa).

The residue at position 2 (Ala-2) is an N-acetylalanine. Residues 19-88 form the BTB domain; the sequence is EVIHLNVGGK…LRTKELDPRG (70 aa). A disordered region spans residues 145 to 165; it reads LVGPQQAGGRPAPVRRSNTMP. Position 163 is a phosphothreonine (Thr-163). WD repeat units follow at residues 233–280, 283–322, 324–359, 428–466, and 548–586; these read RLDW…GGSE, VFHL…WQVQ, VQPI…LRMK, VHRS…GMIS, and LECE…DGLG. Low complexity predominate over residues 611 to 644; sequence ASSRGSLPSPSPRTSLTSLHSAFSNTSLSSRRGS. A disordered region spans residues 611–704; sequence ASSRGSLPSP…PKTKLNETSF (94 aa). Residues 618–623 carry the PXXXPR motif; that stretch reads PSPSPR. A phosphoserine mark is found at Ser-644 and Ser-646. The PXXXPR signature appears at 678-683; the sequence is PTPAPR.

It belongs to the KCTD3 family. Monomer. Interacts with CUL3; interaction is direct and forms a 5:5 heterodecamer. Interacts (via PXXXPR motifs) with SH3KBP1 (via SH3 domains). Directly interacts with cathepsin B/CTSB.

The protein localises to the lysosome. Its function is as follows. Inhibits CBL-SH3KBP1 complex mediated down-regulation of EGFR signaling by sequestration of SH3KBP1. Binds to SH3KBP1 and prevents its interaction with CBL and inhibits translocation of SH3KBP1 to EGFR containing vesicles upon EGF stimulation. This is SH3KBP1-binding protein 1 (SHKBP1) from Bos taurus (Bovine).